The sequence spans 345 residues: Eukaryotic translation initiation factor 3 subunit F (345 aa).

An MPN domain is found at 30–166; the sequence is VVIHPQALFS…TRAYISAPVG (137 aa). The interval 308-345 is disordered; that stretch reads GGESGNAESGQRGGQRGGKGGRGGQQRTQDRSGEEARA. The segment covering 318–331 has biased composition (gly residues); the sequence is QRGGQRGGKGGRGG. Residues 335–345 show a composition bias toward basic and acidic residues; sequence TQDRSGEEARA.

It belongs to the eIF-3 subunit F family. Component of the eukaryotic translation initiation factor 3 (eIF-3) complex.

The protein resides in the cytoplasm. Component of the eukaryotic translation initiation factor 3 (eIF-3) complex, which is involved in protein synthesis of a specialized repertoire of mRNAs and, together with other initiation factors, stimulates binding of mRNA and methionyl-tRNAi to the 40S ribosome. The eIF-3 complex specifically targets and initiates translation of a subset of mRNAs involved in cell proliferation. The sequence is that of Eukaryotic translation initiation factor 3 subunit F from Aspergillus oryzae (strain ATCC 42149 / RIB 40) (Yellow koji mold).